Here is a 534-residue protein sequence, read N- to C-terminus: Pentatricopeptide repeat-containing protein At5g59600 (534 aa).

12 PPR repeats span residues Leu50–Arg80, Asp81–Leu115, Asp116–Ser150, Asp151–Gln181, Asp182–Pro216, Asp217–Pro251, Asp252–Pro286, Asn287–Asp321, His322–Lys352, Thr353–Leu387, Asp388–Lys418, and Arg424–Glu454. The interval Val459–Val534 is type E motif.

It belongs to the PPR family. PCMP-E subfamily.

In Arabidopsis thaliana (Mouse-ear cress), this protein is Pentatricopeptide repeat-containing protein At5g59600 (PCMP-E1).